Here is a 291-residue protein sequence, read N- to C-terminus: ATP synthase gamma chain (291 aa).

It belongs to the ATPase gamma chain family. As to quaternary structure, F-type ATPases have 2 components, CF(1) - the catalytic core - and CF(0) - the membrane proton channel. CF(1) has five subunits: alpha(3), beta(3), gamma(1), delta(1), epsilon(1). CF(0) has three main subunits: a, b and c.

The protein localises to the cell inner membrane. In terms of biological role, produces ATP from ADP in the presence of a proton gradient across the membrane. The gamma chain is believed to be important in regulating ATPase activity and the flow of protons through the CF(0) complex. The protein is ATP synthase gamma chain of Neisseria gonorrhoeae (strain NCCP11945).